The following is a 120-amino-acid chain: Large ribosomal subunit protein uL18c (120 aa).

The protein belongs to the universal ribosomal protein uL18 family. Part of the 50S ribosomal subunit; contacts the 5S rRNA.

The protein localises to the plastid. It is found in the chloroplast. Functionally, binds 5S rRNA, forms part of the central protuberance of the 50S subunit. The polypeptide is Large ribosomal subunit protein uL18c (rpl18) (Porphyra purpurea (Red seaweed)).